We begin with the raw amino-acid sequence, 148 residues long: Snaclec flavocetin-A subunit beta (148 aa).

The first 23 residues, 1–23 (MGQFIFVSFGFLVVATSLSGTEA), serve as a signal peptide directing secretion. Disulfide bonds link cysteine 27–cysteine 38, cysteine 55–cysteine 144, and cysteine 121–cysteine 136. One can recognise a C-type lectin domain in the interval 34 to 145 (YDEHCYQVFQ…CSSKRYVVCK (112 aa)).

It belongs to the snaclec family. Tetramer of heterodimers of alpha and beta subunits (alphabeta)(4); disulfide-linked. In terms of tissue distribution, expressed by the venom gland.

Its subcellular location is the secreted. Strong platelet aggregation inhibitor. Binds specifically to platelet glycoprotein Ibalpha (GP1BA) with high affinity and inhibits vWF-dependent platelet aggregation. Has also been observed to induce small agglutinates in washed platelets by binding to GPIb. The protein is Snaclec flavocetin-A subunit beta of Protobothrops flavoviridis (Habu).